The primary structure comprises 237 residues: 7-cyano-7-deazaguanine synthase (237 aa).

10-20 (FSGGQDSTTCL) serves as a coordination point for ATP. Positions 189, 198, 201, and 204 each coordinate Zn(2+).

Belongs to the QueC family. Zn(2+) is required as a cofactor.

It carries out the reaction 7-carboxy-7-deazaguanine + NH4(+) + ATP = 7-cyano-7-deazaguanine + ADP + phosphate + H2O + H(+). It participates in purine metabolism; 7-cyano-7-deazaguanine biosynthesis. Catalyzes the ATP-dependent conversion of 7-carboxy-7-deazaguanine (CDG) to 7-cyano-7-deazaguanine (preQ(0)). This chain is 7-cyano-7-deazaguanine synthase, found in Aeromonas salmonicida (strain A449).